The sequence spans 341 residues: ATP synthase subunit a 2 (341 aa).

The N-terminal stretch at 1-33 is a signal peptide; the sequence is MKRVKVIQIKGFFRVMALLAPLLLNAYLPVQAS. 6 consecutive transmembrane segments (helical) span residues 112–132, 173–193, 195–215, 242–262, 273–293, and 307–327; these read VVML…VGAA, LPYL…GLIP, GATA…TFFI, WIIM…ALTV, IVIL…VAAA, and IFVA…FIGL.

The protein belongs to the ATPase A chain family. As to quaternary structure, F-type ATPases have 2 components, CF(1) - the catalytic core - and CF(0) - the membrane proton channel. CF(1) has five subunits: alpha(3), beta(3), gamma(1), delta(1), epsilon(1). CF(0) has four main subunits: a, b, b' and c.

The protein resides in the cell inner membrane. Functionally, key component of the proton channel; it plays a direct role in the translocation of protons across the membrane. The protein is ATP synthase subunit a 2 of Chlorobium luteolum (strain DSM 273 / BCRC 81028 / 2530) (Pelodictyon luteolum).